A 91-amino-acid chain; its full sequence is Probable insulin-like peptide gamma-type 1 (91 aa).

A signal peptide spans 1–26 (MSSYRQTLFILIILIVIILFVNEGQG). 3 disulfides stabilise this stretch: C37–C66, C49–C79, and C65–C70.

The protein belongs to the insulin family.

The protein localises to the secreted. The sequence is that of Probable insulin-like peptide gamma-type 1 (ins-11) from Caenorhabditis elegans.